A 284-amino-acid polypeptide reads, in one-letter code: Homeobox protein SIX1 (284 aa).

The homeobox DNA-binding region spans 124–183 (GEETSYCFKEKSRGVLREWYAHNPYPSPREKRELAEATGLTTTQVSNWFKNRRQRDRAAE). The disordered stretch occupies residues 168–284 (VSNWFKNRRQ…LTSSLVDLGS (117 aa)). Over residues 179-190 (DRAAEAKERENT) the composition is skewed to basic and acidic residues. The segment covering 227–284 (DQNSVLLLQSNMGHARSSNYSLPGLTASQPSHGLQAHQHQLQDSLLGPLTSSLVDLGS) has biased composition (polar residues).

The protein belongs to the SIX/Sine oculis homeobox family. Interacts with DACH1. Interacts with EYA1. Interacts with EYA2. Interacts with CDH1. Interacts with TBX18. Interacts with CEBPA. Interacts with CEBPB. Interacts with EBF2. Post-translationally, phosphorylated during interphase; becomes hyperphosphorylated during mitosis. Hyperphosphorylation impairs binding to promoter elements. Ubiquitinated by the anaphase promoting complex (APC), leading to its proteasomal degradation. Expressed in phalangeal tendons and in skeletal muscle and in head and body mesenchyme.

Its subcellular location is the nucleus. The protein resides in the cytoplasm. Functionally, transcription factor that is involved in the regulation of cell proliferation, apoptosis and embryonic development. Plays an important role in the development of several organs, including kidney, muscle and inner ear. Depending on context, functions as a transcriptional repressor or activator. Lacks an activation domain, and requires interaction with EYA family members for transcription activation. Mediates nuclear translocation of EYA1 and EYA2. Binds the 5'-TCA[AG][AG]TTNC-3' motif present in the MEF3 element in the MYOG promoter and CIDEA enhancer. Regulates the expression of numerous genes, including MYC, CCNA1, CCND1 and EZR. Acts as an activator of the IGFBP5 promoter, probably coactivated by EYA2. Repression of precursor cell proliferation in myoblasts is switched to activation through recruitment of EYA3 to the SIX1-DACH1 complex. During myogenesis, seems to act together with EYA2 and DACH2. Regulates the expression of CCNA1. Promotes brown adipocyte differentiation. This is Homeobox protein SIX1 (Six1) from Mus musculus (Mouse).